The following is a 121-amino-acid chain: Large ribosomal subunit protein bL19 (121 aa).

This sequence belongs to the bacterial ribosomal protein bL19 family.

This protein is located at the 30S-50S ribosomal subunit interface and may play a role in the structure and function of the aminoacyl-tRNA binding site. This Neisseria gonorrhoeae (strain ATCC 700825 / FA 1090) protein is Large ribosomal subunit protein bL19.